Here is a 45-residue protein sequence, read N- to C-terminus: Monellin chain A (45 aa).

Heterodimer of an A chain and a B chain.

Taste-modifying protein; intensely sweet-tasting protein. The sequence is that of Monellin chain A from Dioscoreophyllum cumminsii (Serendipity berry).